Here is a 75-residue protein sequence, read N- to C-terminus: Lividin-3 (75 aa).

Positions 1 to 22 are cleaved as a signal peptide; sequence MFTLKKSLLLLFFLGTISLSLC. Positions 23–40 are excised as a propeptide; that stretch reads EEERDADEDEGEMTEEEV. Cys-69 and Cys-75 form a disulfide bridge.

As to expression, expressed by the skin glands.

Its subcellular location is the secreted. In terms of biological role, antimicrobial peptide. In Odorrana livida (Green mountain frog), this protein is Lividin-3.